Consider the following 203-residue polypeptide: Protein-methionine-sulfoxide reductase heme-binding subunit MsrQ (203 aa).

Helical transmembrane passes span 10–30, 37–57, 75–95, 110–130, 147–167, and 169–189; these read IFVL…MGLL, IMMD…LSMT, LGLW…VFIL, PYII…VTSN, LVYV…RSDL, and EWAI…PPVW.

It belongs to the MsrQ family. As to quaternary structure, heterodimer of a catalytic subunit (MsrP) and a heme-binding subunit (MsrQ). FMN is required as a cofactor. It depends on heme b as a cofactor.

The protein localises to the cell inner membrane. Part of the MsrPQ system that repairs oxidized periplasmic proteins containing methionine sulfoxide residues (Met-O), using respiratory chain electrons. Thus protects these proteins from oxidative-stress damage caused by reactive species of oxygen and chlorine generated by the host defense mechanisms. MsrPQ is essential for the maintenance of envelope integrity under bleach stress, rescuing a wide series of structurally unrelated periplasmic proteins from methionine oxidation. MsrQ provides electrons for reduction to the reductase catalytic subunit MsrP, using the quinone pool of the respiratory chain. This chain is Protein-methionine-sulfoxide reductase heme-binding subunit MsrQ, found in Pseudomonas entomophila (strain L48).